Reading from the N-terminus, the 74-residue chain is Protein A30 homolog (74 aa).

It belongs to the chordopoxvirinae A30 family. Interacts with protein G7; the interaction stabilizes both proteins. In terms of processing, phosphorylated by viral F10 kinase.

Required for the association between the dense viroplasm and the viral membranes to form the mature virion (MV). The protein is Protein A30 homolog of Fowlpox virus (strain NVSL) (FPV).